A 210-amino-acid chain; its full sequence is Ribosomal RNA large subunit methyltransferase E (210 aa).

5 residues coordinate S-adenosyl-L-methionine: glycine 61, tryptophan 63, aspartate 81, aspartate 97, and aspartate 122. The active-site Proton acceptor is the lysine 162.

This sequence belongs to the class I-like SAM-binding methyltransferase superfamily. RNA methyltransferase RlmE family.

The protein resides in the cytoplasm. The catalysed reaction is uridine(2552) in 23S rRNA + S-adenosyl-L-methionine = 2'-O-methyluridine(2552) in 23S rRNA + S-adenosyl-L-homocysteine + H(+). In terms of biological role, specifically methylates the uridine in position 2552 of 23S rRNA at the 2'-O position of the ribose in the fully assembled 50S ribosomal subunit. The chain is Ribosomal RNA large subunit methyltransferase E from Xanthomonas axonopodis pv. citri (strain 306).